The chain runs to 123 residues: Class II hydrophobin 2 (123 aa).

The signal sequence occupies residues 1–16; sequence MRSFLVIATLAVGAFG. 4 cysteine pairs are disulfide-bonded: Cys-22–Cys-70, Cys-32–Cys-61, Cys-33–Cys-45, and Cys-71–Cys-82.

Belongs to the cerato-ulmin hydrophobin family. As to quaternary structure, homodimer. Homodimers further self-assemble to form highly ordered films at water-air interfaces through intermolecular interactions.

Its subcellular location is the secreted. The protein localises to the cell wall. Its function is as follows. Aerial growth, conidiation, and dispersal of filamentous fungi in the environment rely upon a capability of their secreting small amphipathic proteins called hydrophobins (HPBs) with low sequence identity. Class I can self-assemble into an outermost layer of rodlet bundles on aerial cell surfaces, conferring cellular hydrophobicity that supports fungal growth, development and dispersal; whereas Class II form highly ordered films at water-air interfaces through intermolecular interactions but contribute nothing to the rodlet structure. Hyd2 is a class II hydrophobin that plays probably a role in intraspecific signaling or hyphal fusion. Not necessary for root adhesion and colonization. Might play an essential role since no deletion mutants could be obtained. In Bionectria ochroleuca (Gliocladium roseum), this protein is Class II hydrophobin 2.